Here is a 227-residue protein sequence, read N- to C-terminus: A-type potassium channel modulatory protein KCNIP1 (227 aa).

Residues 38 to 94 (LEMTMVCHRPEGLEQLEAQTNFTKRELQVLYRGFKNECPSGVVNEETFKQIYAQFFP) form the EF-hand 1; degenerate domain. EF-hand domains are found at residues 97–132 (DASTYAHYLFNAFDTTQTGSVKFEDFVTALSILLRG), 133–168 (TVHEKLRWTFNLYDINKDGYINKEEMMDIVKAIYDM), and 181–216 (TPRQHVDVFFQKMDKNKDGIVTLDEFLESCQEDDNI). 9 residues coordinate Ca(2+): aspartate 146, asparagine 148, aspartate 150, tyrosine 152, glutamate 157, aspartate 194, asparagine 196, aspartate 198, and glutamate 205. An interaction with KCND2 region spans residues 214-227 (DNIMRSLQLFQNVM).

This sequence belongs to the recoverin family. Component of heteromultimeric potassium channels. Identified in potassium channel complexes containing KCND1, KCND2, KCND3, KCNIP1, KCNIP2, KCNIP3, KCNIP4, DPP6 and DPP10. Part of a heterooctamer composed of the tetrameric channel and four KCNIP1 chains. Probably part of a complex consisting of KCNIP1, KCNIP2 isoform 3 and KCND2. Self-associates to form homodimers and homotetramers. Interacts with KCNIP2 isoform 3 in a calcium-dependent manner. Interacts with KCND2; this interaction mediates the capture of both the N- and C-terminus of KCND2, thus preventing KCND2 N-type inactivation and modulates the channel gating kinetics. Interacts with KCND3; each KCNIP1 monomer interacts with two adjacent KCND3 subunits, through both the N-terminal inactivation ball of a KCND3 subunit and a C-terminal helix from the adjacent KCND3 subunit, clamping them together; this interaction stabilizes the tetrameric form and modulates the channel gating kinetics namely channel activation and inactivation kinetics and rate of recovery from inactivation. Detected in hippocampus and in the molecular layer of the dentate gyrus (at protein level). Isoform 1 and isoform 2 are predominantly expressed at equal levels in brain. Colocalizes with KCND3 in inhibitory interneurons in cortex and hippocampus and in striatal interneurons.

It is found in the cell membrane. The protein localises to the cytoplasm. Its subcellular location is the cell projection. It localises to the dendrite. Functionally, regulatory subunit of Kv4/D (Shal)-type voltage-gated rapidly inactivating A-type potassium channels. Regulates channel density, inactivation kinetics and rate of recovery from inactivation in a calcium-dependent and isoform-specific manner. Modulates KCND2/Kv4.2 currents. In vitro, modulates KCND1/Kv4.1 currents. Increases the presence of KCND2 at the cell surface. The chain is A-type potassium channel modulatory protein KCNIP1 from Rattus norvegicus (Rat).